The sequence spans 844 residues: Fe(2+) transport protein A/Fe(2+) transporter FeoB fusion protein (844 aa).

The interval 1–73 (MRLSELHTGD…EDAAKIEVEL (73 aa)) is feoA. The feoB stretch occupies residues 74-844 (ISSNATSSPA…LIYRIGILFF (771 aa)). The segment covering 79–106 (TSSPASNDIGEQSANPDSNESIPTNPTE) has biased composition (polar residues). The interval 79–110 (TSSPASNDIGEQSANPDSNESIPTNPTEDISA) is disordered. In terms of domain architecture, FeoB-type G spans 126-289 (VIRVALIGNP…FDTLISIHEG (164 aa)). GTP-binding positions include 133 to 140 (GNPNCGKT), 158 to 162 (GVTVE), 179 to 182 (DLPG), 240 to 243 (NMFD), and 269 to 271 (VGR). 8 consecutive transmembrane segments (helical) span residues 418–438 (VLGFPLFLLFMFIMFEATFVL), 475–495 (IGGVGGVIVFLPNILILYFFI), 520–540 (LHGKSFIPLIMGFGCNVPAIM), 559–579 (PLMSCSARLPVYLLLAGAFFP), 581–601 (SAGLVLFGLYFLGILLAVLLA), 646–666 (MGSIILLASIVIWFLSYYPRY), 786–806 (IIALALMAFVLIYFPCIATVV), and 817–837 (WAVFSIIYSCSLAWIVSFLIY).

The protein in the N-terminal section; belongs to the FeoA family. In the C-terminal section; belongs to the TRAFAC class TrmE-Era-EngA-EngB-Septin-like GTPase superfamily. FeoB GTPase (TC 9.A.8) family.

Its subcellular location is the cell inner membrane. In terms of biological role, probable transporter of a GTP-driven Fe(2+) uptake system. The polypeptide is Fe(2+) transport protein A/Fe(2+) transporter FeoB fusion protein (Porphyromonas gingivalis (strain ATCC BAA-308 / W83)).